Here is a 363-residue protein sequence, read N- to C-terminus: NAD(P)H-quinone oxidoreductase subunit 1, chloroplastic (363 aa).

The next 9 membrane-spanning stretches (helical) occupy residues 30-50, 98-118, 129-149, 165-185, 203-223, 248-268, 269-289, 300-320, and 334-354; these read LVPI…IVWL, FSIG…VIPF, IGVF…LMSG, AAQS…ISLL, LWGW…ISSL, YSGI…LVSS, LFVT…IFVP, VFGT…FLFI, and DQLL…NLLL.

Belongs to the complex I subunit 1 family. NDH is composed of at least 16 different subunits, 5 of which are encoded in the nucleus.

The protein resides in the plastid. The protein localises to the chloroplast thylakoid membrane. It carries out the reaction a plastoquinone + NADH + (n+1) H(+)(in) = a plastoquinol + NAD(+) + n H(+)(out). The enzyme catalyses a plastoquinone + NADPH + (n+1) H(+)(in) = a plastoquinol + NADP(+) + n H(+)(out). NDH shuttles electrons from NAD(P)H:plastoquinone, via FMN and iron-sulfur (Fe-S) centers, to quinones in the photosynthetic chain and possibly in a chloroplast respiratory chain. The immediate electron acceptor for the enzyme in this species is believed to be plastoquinone. Couples the redox reaction to proton translocation, and thus conserves the redox energy in a proton gradient. This Oenothera elata subsp. hookeri (Hooker's evening primrose) protein is NAD(P)H-quinone oxidoreductase subunit 1, chloroplastic.